Consider the following 410-residue polypeptide: Dipeptidase ataJ (410 aa).

Residues histidine 27, aspartate 29, and glutamate 138 each contribute to the Zn(2+) site. Histidine 165 provides a ligand contact to substrate. A disordered region spans residues 180–200 (TSSPWSEYGGQTHDPGDEPSR). Residues arginine 258 and aspartate 318 each coordinate substrate.

The protein belongs to the metallo-dependent hydrolases superfamily. Peptidase M19 family. The cofactor is Zn(2+).

The enzyme catalyses an L-aminoacyl-L-amino acid + H2O = 2 an L-alpha-amino acid. It participates in mycotoxin biosynthesis. Dipeptidase; part of the gene cluster that mediates the biosynthesis of acetylaranotin, a member of the epipolythiodioxopiperazine (ETP) class of toxins characterized by a disulfide-bridged cyclic dipeptide. The first step of acetylaranotin biosynthesis is performed by the NRPS ataP which produces diketopiperazine cyclo-L-Phe-L-Phe via the condensation of 2 phenylalanines (L-Phe). The ataC domain of ataTC then catalyzes the formation of bishydroxylation of cyclo-L-Phe-L-Phe. The glutathione S-transferase domain ataG in ataIMG further catalyzes the conjugation of two glutathiones to the bishydroxylated intermediate. Next, the dipeptidase ataJ removes the Glu residues. The following step is performed by the carbon sulfur lyase domain ataI of ataIMG which may convert the bis-cysteinyl adduct to yield an epidithiol intermediate. The ataT domain from ataTC then catalyzes the oxidation of the free dithiols, followed by a cyclization step catalyzed by the cytochrome P450 ataF. AtaF probably acts as an epoxidase to promote a dual epoxidation formation at C8 and C9 along with C8' and C9', followed by the spontaneous nucleophilic attack of the amide nitrogens N10 and N10' to yield an intermediate with the pyrrolidine partial structure. The final steps of acetylaranotin biosynthesis involve the acetylation and ring rearrangement of an epitetrathiodiketopiperazine intermediate to produce acetylaranotin. AtaH probably catalyzes the acetylation of epitetrathiodiketopiperazine to produce a diacetate and ataY is responsible for the formation of the dihydrooxepin moiety that converts the diacetate intermediate to acetylaranotin via acetylapoaranotin. Both enzymes could function independently in the absence of the other. The acetylaranotin bis-thiomethyltransferase ataS located outside of acetylaranotin gene cluster is the main thiomethyltransferase responsible for converting acetylaranotin and its related intermediates to their methylated forms. This chain is Dipeptidase ataJ, found in Aspergillus terreus (strain NIH 2624 / FGSC A1156).